Consider the following 29-residue polypeptide: MAEAFYILIGFLIMAAIIVMAVLYLENHS.

A helical membrane pass occupies residues 5 to 25 (FYILIGFLIMAAIIVMAVLYL).

Its subcellular location is the cell inner membrane. The sequence is that of Protein YldA from Escherichia coli (strain K12).